The following is a 490-amino-acid chain: MSNVVLIVYDPRMISKYLGQKLHMGLVADDIIKPTAEIAQQIFANFVRLVLNVSESSLTTLPLSANCDYDPELHKKSIPIIILFQCMKAFIKDNSGNKLDLTMCDLVTPAKHEHRFRKLTSFLVDFLKLHELATPAFNEISEEFSDRKFEMEKIREELLEAEKKKNDLLAKQSIRKRHEHELINEQSNAKAELKNVVNEYTETRQINEELDKQKEEAILHIQALEKEMLTGKKTIEHLNEEVLTSPEQLKQEMEERKRHIEELRDCLESSKKGLQAKLEAREICINSEKNVPVIIEKIHQWTEVREVIIDLIDVESENLRKLKEMEEQLDFMMKEMETAQKRLVEQSETHEQLRIEHTQKSEERQRRIEEITEQIANLKTSQPDVSQEIAKKKQELLALKNAHSETISQITNSCQDAVAKFAKLNAMFKETQKVAFEKNTAAAREMERLKSSLTGRLLSDYTFGSSTIDAGENTENCDPQPNDSSFSVFK.

2 coiled-coil regions span residues 146-280 (DRKF…KLEA) and 310-407 (DLID…SETI). Disordered regions lie at residues 346–365 (QSETHEQLRIEHTQKSEERQ) and 468–490 (IDAGENTENCDPQPNDSSFSVFK).

It belongs to the NUF2 family. In terms of assembly, component of the NDC80 complex, which is composed of at least ndc-80 and him-10. The NDC80 complex interacts with knl-1.

It localises to the nucleus. The protein resides in the chromosome. It is found in the centromere. Its subcellular location is the kinetochore. Its function is as follows. Acts as a component of the essential kinetochore-associated NDC80 complex, which is required for chromosome segregation in mitosis and meiosis and spindle checkpoint activity. The ndc-80 complex synergistically enhances the affinity of the ska-1 complex for microtubules and may allow the ndc-80 complex to track depolymerizing microtubules. This is Kinetochore protein Nuf2 homolog (him-10) from Caenorhabditis elegans.